The following is a 311-amino-acid chain: Ornithine carbamoyltransferase (311 aa).

Residues Ser54–Thr57, Gln81, Arg105, and His132–Gln135 each bind carbamoyl phosphate. L-ornithine is bound by residues Asn164, Asp228, and Ser232–Met233. Carbamoyl phosphate-binding positions include Cys268–Leu269 and Arg296.

It belongs to the aspartate/ornithine carbamoyltransferase superfamily. OTCase family.

Its subcellular location is the cytoplasm. The catalysed reaction is carbamoyl phosphate + L-ornithine = L-citrulline + phosphate + H(+). It functions in the pathway amino-acid biosynthesis; L-arginine biosynthesis; L-arginine from L-ornithine and carbamoyl phosphate: step 1/3. Its function is as follows. Reversibly catalyzes the transfer of the carbamoyl group from carbamoyl phosphate (CP) to the N(epsilon) atom of ornithine (ORN) to produce L-citrulline. In Renibacterium salmoninarum (strain ATCC 33209 / DSM 20767 / JCM 11484 / NBRC 15589 / NCIMB 2235), this protein is Ornithine carbamoyltransferase.